Reading from the N-terminus, the 267-residue chain is Diphthine synthase (267 aa).

Residues Leu-9, Asp-85, Val-88, 113–114 (SI), Leu-170, Ala-211, and His-236 each bind S-adenosyl-L-methionine.

Belongs to the diphthine synthase family. As to quaternary structure, homodimer.

It catalyses the reaction 2-[(3S)-amino-3-carboxypropyl]-L-histidyl-[translation elongation factor 2] + 3 S-adenosyl-L-methionine = diphthine-[translation elongation factor 2] + 3 S-adenosyl-L-homocysteine + 3 H(+). It participates in protein modification; peptidyl-diphthamide biosynthesis. Its function is as follows. S-adenosyl-L-methionine-dependent methyltransferase that catalyzes the trimethylation of the amino group of the modified target histidine residue in translation elongation factor 2 (EF-2), to form an intermediate called diphthine. The three successive methylation reactions represent the second step of diphthamide biosynthesis. This chain is Diphthine synthase, found in Methanococcoides burtonii (strain DSM 6242 / NBRC 107633 / OCM 468 / ACE-M).